Here is a 48-residue protein sequence, read N- to C-terminus: Small polypeptide DEVIL 19 (48 aa).

The interval 13 to 44 (AFTSKCVSLVKEQRARLYILRRCATMLCCWYI) is required for DVL/RTFL small polypeptide activity. The helical transmembrane segment at 25–42 (QRARLYILRRCATMLCCW) threads the bilayer.

The protein belongs to the DVL/RTFL small polypeptides family.

The protein localises to the cell membrane. Its function is as follows. Small polypeptide acting as a regulatory molecule which coordinates cellular responses required for differentiation, growth and development, probably by restricting polar cell proliferation in lateral organs and coordinating socket cell recruitment and differentiation at trichome sites. In Arabidopsis thaliana (Mouse-ear cress), this protein is Small polypeptide DEVIL 19.